Reading from the N-terminus, the 328-residue chain is Tetraacyldisaccharide 4'-kinase (328 aa).

55–62 (TAGGNGKT) is a binding site for ATP.

This sequence belongs to the LpxK family.

The enzyme catalyses a lipid A disaccharide + ATP = a lipid IVA + ADP + H(+). It functions in the pathway glycolipid biosynthesis; lipid IV(A) biosynthesis; lipid IV(A) from (3R)-3-hydroxytetradecanoyl-[acyl-carrier-protein] and UDP-N-acetyl-alpha-D-glucosamine: step 6/6. Functionally, transfers the gamma-phosphate of ATP to the 4'-position of a tetraacyldisaccharide 1-phosphate intermediate (termed DS-1-P) to form tetraacyldisaccharide 1,4'-bis-phosphate (lipid IVA). The chain is Tetraacyldisaccharide 4'-kinase from Escherichia coli O17:K52:H18 (strain UMN026 / ExPEC).